Consider the following 237-residue polypeptide: Ribonuclease PH (237 aa).

Phosphate-binding positions include arginine 86 and 124 to 126 (GTR).

This sequence belongs to the RNase PH family. In terms of assembly, homohexameric ring arranged as a trimer of dimers.

The catalysed reaction is tRNA(n+1) + phosphate = tRNA(n) + a ribonucleoside 5'-diphosphate. In terms of biological role, phosphorolytic 3'-5' exoribonuclease that plays an important role in tRNA 3'-end maturation. Removes nucleotide residues following the 3'-CCA terminus of tRNAs; can also add nucleotides to the ends of RNA molecules by using nucleoside diphosphates as substrates, but this may not be physiologically important. Probably plays a role in initiation of 16S rRNA degradation (leading to ribosome degradation) during starvation. This Beijerinckia indica subsp. indica (strain ATCC 9039 / DSM 1715 / NCIMB 8712) protein is Ribonuclease PH.